Here is a 1251-residue protein sequence, read N- to C-terminus: Myosin-1 (1251 aa).

Residues 1–37 (MGQSKRPFKNKEEKKSRGFGRSRHDDAGAGGRPQVKK) form a disordered region. Residues 9–27 (KNKEEKKSRGFGRSRHDDA) show a composition bias toward basic and acidic residues. The region spanning 48–727 (IGVSDLTLLS…TLFALEHMRD (680 aa)) is the Myosin motor domain. 141–148 (GESGAGKT) serves as a coordination point for ATP. Residue serine 369 is modified to Phosphoserine. Residues 416-498 (TIGILDIYGF…PGVFAALNDA (83 aa)) are actin-binding. 2 IQ domains span residues 731–751 (HNMA…RTEC) and 752–777 (AIRI…QGHK). Positions 785–980 (RRRYSLVGSR…PGEPANSVSK (196 aa)) constitute a TH1 domain. Disordered regions lie at residues 958–1093 (RDDV…SNEL) and 1135–1227 (AKTP…ASIA). A compositionally biased stretch (low complexity) spans 1040–1052 (VAQSVTAVAAAHA). Over residues 1061 to 1073 (RPPPPPPPTQPPA) the composition is skewed to pro residues. Positions 1074-1135 (PKKDTAKALY…PEAYLEPIVA (62 aa)) constitute an SH3 domain. Over residues 1139–1148 (SLPPPPPSLP) the composition is skewed to pro residues. 2 stretches are compositionally biased toward polar residues: residues 1150–1161 (QSKSAVSNTLPN) and 1216–1225 (ATPSSLSNAS).

Belongs to the TRAFAC class myosin-kinesin ATPase superfamily. Myosin family. Post-translationally, phosphorylation of the TEDS site (Ser-369) is required for the polarization of the actin cytoskeleton. Phosphorylation probably activates the myosin-I ATPase activity.

It localises to the cytoplasm. The protein resides in the cytoskeleton. It is found in the actin patch. In terms of biological role, type-I myosin implicated in the organization of the actin cytoskeleton. Required for proper actin cytoskeleton polarization. At the cell cortex, assembles in patch-like structures together with proteins from the actin-polymerizing machinery and promotes actin assembly. Functions as actin nucleation-promoting factor (NPF) for the Arp2/3 complex. This Coccidioides immitis (strain RS) (Valley fever fungus) protein is Myosin-1 (MYO1).